Here is a 1357-residue protein sequence, read N- to C-terminus: DNA-directed RNA polymerase subunit beta (1357 aa).

This sequence belongs to the RNA polymerase beta chain family. The RNAP catalytic core consists of 2 alpha, 1 beta, 1 beta' and 1 omega subunit. When a sigma factor is associated with the core the holoenzyme is formed, which can initiate transcription.

The catalysed reaction is RNA(n) + a ribonucleoside 5'-triphosphate = RNA(n+1) + diphosphate. In terms of biological role, DNA-dependent RNA polymerase catalyzes the transcription of DNA into RNA using the four ribonucleoside triphosphates as substrates. This is DNA-directed RNA polymerase subunit beta from Pseudomonas putida (Arthrobacter siderocapsulatus).